Here is a 260-residue protein sequence, read N- to C-terminus: Alpha-acetolactate decarboxylase (260 aa).

It belongs to the alpha-acetolactate decarboxylase family.

The catalysed reaction is (2S)-2-acetolactate + H(+) = (R)-acetoin + CO2. It participates in polyol metabolism; (R,R)-butane-2,3-diol biosynthesis; (R,R)-butane-2,3-diol from pyruvate: step 2/3. Its function is as follows. Converts acetolactate into acetoin, which can be excreted by the cells. This may be a mechanism for controlling the internal pH of cells in the stationary stage. The sequence is that of Alpha-acetolactate decarboxylase (budA) from Klebsiella aerogenes (Enterobacter aerogenes).